Consider the following 208-residue polypeptide: Imidazole glycerol phosphate synthase subunit HisH (208 aa).

The Glutamine amidotransferase type-1 domain maps to 1–206 (MIVIIDYDTG…KEVIRSCKSS (206 aa)). Cys-79 acts as the Nucleophile in catalysis. Residues His-181 and Glu-183 contribute to the active site.

Heterodimer of HisH and HisF.

Its subcellular location is the cytoplasm. The enzyme catalyses 5-[(5-phospho-1-deoxy-D-ribulos-1-ylimino)methylamino]-1-(5-phospho-beta-D-ribosyl)imidazole-4-carboxamide + L-glutamine = D-erythro-1-(imidazol-4-yl)glycerol 3-phosphate + 5-amino-1-(5-phospho-beta-D-ribosyl)imidazole-4-carboxamide + L-glutamate + H(+). It carries out the reaction L-glutamine + H2O = L-glutamate + NH4(+). It functions in the pathway amino-acid biosynthesis; L-histidine biosynthesis; L-histidine from 5-phospho-alpha-D-ribose 1-diphosphate: step 5/9. Its function is as follows. IGPS catalyzes the conversion of PRFAR and glutamine to IGP, AICAR and glutamate. The HisH subunit catalyzes the hydrolysis of glutamine to glutamate and ammonia as part of the synthesis of IGP and AICAR. The resulting ammonia molecule is channeled to the active site of HisF. This is Imidazole glycerol phosphate synthase subunit HisH from Listeria monocytogenes serotype 4b (strain CLIP80459).